Consider the following 392-residue polypeptide: Integrin-linked kinase-associated serine/threonine phosphatase 2C (392 aa).

Position 1 is an N-acetylmethionine (M1). Positions 1-90 (MDLFGDLPEP…TSEEEKNGSE (90 aa)) are disordered. S13 bears the Phosphoserine mark. The segment covering 56-70 (SGDSGSLATSISQMV) has biased composition (polar residues). Residues 72-90 (TEGKGAKRKTSEEEKNGSE) show a composition bias toward basic and acidic residues. A PPM-type phosphatase domain is found at 108 to 390 (KGYVAERKGE…DNVTVMVVRI (283 aa)). Residues D152 and G153 each contribute to the Mn(2+) site. K210 is subject to N6-acetyllysine. The Mn(2+) site is built by D326 and D381.

The protein belongs to the PP2C family. Interacts with ILK. Specific association with ILK is independent of the catalytic activity of either partner. Mg(2+) is required as a cofactor. Requires Mn(2+) as cofactor. As to expression, widely expressed. Highest levels expressed in striated muscle. Much lower levels evident in various smooth muscle tissues.

It is found in the cytoplasm. It catalyses the reaction O-phospho-L-seryl-[protein] + H2O = L-seryl-[protein] + phosphate. It carries out the reaction O-phospho-L-threonyl-[protein] + H2O = L-threonyl-[protein] + phosphate. With respect to regulation, inhibited rather than stimulated by magnesium. Protein phosphatase that may play a role in regulation of cell cycle progression via dephosphorylation of its substrates whose appropriate phosphorylation states might be crucial for cell proliferation. Selectively associates with integrin linked kinase (ILK), to modulate cell adhesion and growth factor signaling. Inhibits the ILK-GSK3B signaling axis and may play an important role in inhibiting oncogenic transformation. In Homo sapiens (Human), this protein is Integrin-linked kinase-associated serine/threonine phosphatase 2C (ILKAP).